Consider the following 1627-residue polypeptide: Adhesin P1 (1627 aa).

An N-terminal signal peptide occupies residues 1-59 (MHQTKKTALSKSTWILILTATASLATGLTVVGHFTSTTTTLKRQQFSYTRPDEVALRHT). Disordered stretches follow at residues 219–238 (LPQQ…AMFG), 252–355 (NEKL…PWRP), 898–953 (WRND…TTQD), and 1274–1362 (SFGT…TGND). The segment covering 224–234 (TESGQNTSTTG) has biased composition (polar residues). The span at 261–276 (TGSSTTSGSGQSTQRG) shows a compositional bias: low complexity. The span at 282–297 (TKVKALKIEVKKKSDS) shows a compositional bias: basic and acidic residues. 3 stretches are compositionally biased toward polar residues: residues 903–933 (ASSG…SAGN), 939–953 (QDNI…TTQD), and 1274–1297 (SFGT…VFGT). Over residues 1307–1320 (SGGGAGGGSSGSGQ) the composition is skewed to gly residues. Positions 1341–1352 (STSDGNTSSTNN) are enriched in low complexity. A cytadherence epitope region spans residues 1403-1415 (GPQSVKFKSPDQI). A helical transmembrane segment spans residues 1527–1547 (AITVPIVVIVLSVTLGLAIGI). The disordered stretch occupies residues 1589–1627 (QAPKRLKQTSAAKPGAPRPPVPPKPGAPKPPVQPPKKPA). Over residues 1604–1627 (APRPPVPPKPGAPKPPVQPPKKPA) the composition is skewed to pro residues.

Belongs to the adhesin P1 family.

Its subcellular location is the cell membrane. The protein resides in the cell projection. The protein localises to the attachment organelle. It localises to the cell surface. Functionally, the protein is the major adhesin mediating the attachment of this mycoplasma to respiratory epithelium. This chain is Adhesin P1 (mgpA), found in Mycoplasma pneumoniae (strain ATCC 29342 / M129 / Subtype 1) (Mycoplasmoides pneumoniae).